The primary structure comprises 428 residues: Enolase (428 aa).

Glutamine 167 contributes to the (2R)-2-phosphoglycerate binding site. Catalysis depends on glutamate 209, which acts as the Proton donor. Aspartate 246, glutamate 289, and aspartate 316 together coordinate Mg(2+). (2R)-2-phosphoglycerate is bound by residues lysine 341, arginine 370, serine 371, and lysine 392. Residue lysine 341 is the Proton acceptor of the active site.

Belongs to the enolase family. Component of the RNA degradosome, a multiprotein complex involved in RNA processing and mRNA degradation. The cofactor is Mg(2+).

The protein resides in the cytoplasm. Its subcellular location is the secreted. It localises to the cell surface. It catalyses the reaction (2R)-2-phosphoglycerate = phosphoenolpyruvate + H2O. Its pathway is carbohydrate degradation; glycolysis; pyruvate from D-glyceraldehyde 3-phosphate: step 4/5. Functionally, catalyzes the reversible conversion of 2-phosphoglycerate (2-PG) into phosphoenolpyruvate (PEP). It is essential for the degradation of carbohydrates via glycolysis. This is Enolase from Saccharophagus degradans (strain 2-40 / ATCC 43961 / DSM 17024).